A 479-amino-acid chain; its full sequence is U6 small nuclear RNA (adenine-(43)-N(6))-methyltransferase (479 aa).

Residues K82, G108, D131, T164, and N184 each coordinate S-adenosyl-L-methionine. The segment at D420–Q424 is involved in dlc-1 binding.

Belongs to the methyltransferase superfamily. METTL16/RlmF family. Self-associates. Interacts with dlc-1; the interaction is direct, and is required for nuclear localization of mett-10. In terms of tissue distribution, expressed in the intestine, vulva, and cells of the somatic gonad including distal tip cells, gonadal sheath cells and spermatheca.

The protein resides in the nucleus. It catalyses the reaction an adenosine in mRNA + S-adenosyl-L-methionine = an N(6)-methyladenosine in mRNA + S-adenosyl-L-homocysteine + H(+). The catalysed reaction is adenosine in U6 snRNA + S-adenosyl-L-methionine = N(6)-methyladenosine in U6 snRNA + S-adenosyl-L-homocysteine + H(+). Functionally, RNA N6-methyltransferase that methylates adenosine residues at the N(6) position of a subset of RNAs and is involved in S-adenosyl-L-methionine homeostasis by regulating splicing of S-adenosylmethionine synthase transcripts (sams-3, sams-4 and sams-5). Able to N6-methylate a subset of mRNAs containing the 5'UACAGAAAC-3' nonamer sequence. Plays a key role in S-adenosyl-L-methionine homeostasis: under rich-diet conditions, catalyzes N6-methylation of S-adenosylmethionine synthase mRNAs (sams-3, sams-4 and sams-5), directly inhibiting splicing and protein production of S-adenosylmethionine synthase. In addition to mRNAs, also able to mediate N6-methylation of U6 small nuclear RNA (U6 snRNA). Required for gamete production, inhibiting germ cell proliferative fate and ensuring germ cell meiotic development. Also promotes progression of the mitotic cell cycle in those germ cells that continue to proliferate. Plays a role in the development of the vulva, somatic gonad and embryo. In Caenorhabditis elegans, this protein is U6 small nuclear RNA (adenine-(43)-N(6))-methyltransferase.